A 600-amino-acid chain; its full sequence is NADH-quinone oxidoreductase subunit C/D (600 aa).

The NADH dehydrogenase I subunit C stretch occupies residues 1 to 190 (MVNNMTDLTA…DPFELTKAKQ (190 aa)). The interval 214 to 600 (DFMFLNLGPN…IDFVMSDVDR (387 aa)) is NADH dehydrogenase I subunit D.

This sequence in the N-terminal section; belongs to the complex I 30 kDa subunit family. It in the C-terminal section; belongs to the complex I 49 kDa subunit family. In terms of assembly, NDH-1 is composed of 13 different subunits. Subunits NuoB, CD, E, F, and G constitute the peripheral sector of the complex.

It is found in the cell inner membrane. The enzyme catalyses a quinone + NADH + 5 H(+)(in) = a quinol + NAD(+) + 4 H(+)(out). Its function is as follows. NDH-1 shuttles electrons from NADH, via FMN and iron-sulfur (Fe-S) centers, to quinones in the respiratory chain. The immediate electron acceptor for the enzyme in this species is believed to be ubiquinone. Couples the redox reaction to proton translocation (for every two electrons transferred, four hydrogen ions are translocated across the cytoplasmic membrane), and thus conserves the redox energy in a proton gradient. The chain is NADH-quinone oxidoreductase subunit C/D from Salmonella paratyphi A (strain ATCC 9150 / SARB42).